A 341-amino-acid chain; its full sequence is Cyclic GMP-AMP synthase-like receptor (341 aa).

ATP is bound by residues S64 and 77–79 (EFD). Residues E77, D79, and D172 each coordinate Mg(2+). D172 contacts GTP. ATP is bound by residues K230 and 246 to 250 (SYHIK). E258 contributes to the Mn(2+) binding site.

This sequence belongs to the mab-21 family. Mg(2+) is required as a cofactor. Mn(2+) serves as cofactor.

It carries out the reaction GTP + ATP = 2',3'-cGAMP + 2 diphosphate. The enzyme catalyses GTP + ATP = pppGp(2'-5')A + diphosphate. It catalyses the reaction pppGp(2'-5')A = 2',3'-cGAMP + diphosphate. Nucleotidyltransferase that catalyzes the formation of cyclic GMP-AMP (2',3'-cGAMP) from ATP and GTP and plays a key role in innate immunity. Acts as a key sensor of double-stranded RNA (dsRNA), the presence of dsRNA in the cytoplasm being a danger signal that triggers the immune responses. Directly binds dsRNA, activating the nucleotidyltransferase activity, leading to synthesis of 2',3'-cGAMP, a second messenger that binds to and activates Sting, thereby triggering the immune response via activation of the NF-kappa-B transcription factor. This is Cyclic GMP-AMP synthase-like receptor from Hydra vulgaris (Hydra).